We begin with the raw amino-acid sequence, 425 residues long: Glutamyl-tRNA reductase (425 aa).

Residues 49–52, Ser107, 112–114, and Gln118 contribute to the substrate site; these read TCNR and EPQ. Cys50 functions as the Nucleophile in the catalytic mechanism. 187–192 provides a ligand contact to NADP(+); it reads GAGETI.

The protein belongs to the glutamyl-tRNA reductase family. As to quaternary structure, homodimer.

It carries out the reaction (S)-4-amino-5-oxopentanoate + tRNA(Glu) + NADP(+) = L-glutamyl-tRNA(Glu) + NADPH + H(+). The protein operates within porphyrin-containing compound metabolism; protoporphyrin-IX biosynthesis; 5-aminolevulinate from L-glutamyl-tRNA(Glu): step 1/2. In terms of biological role, catalyzes the NADPH-dependent reduction of glutamyl-tRNA(Glu) to glutamate 1-semialdehyde (GSA). In Pseudomonas syringae pv. syringae (strain B728a), this protein is Glutamyl-tRNA reductase.